Here is a 146-residue protein sequence, read N- to C-terminus: MAEDTKKLEELAYQYQLLQAQAQLLAQNLELLTLGRNEFQAVKETLEGLKNEEGEFEILVPIGAGSFLKGKIVDAKNAIVSVGAGYAVQKSLDDSIEYLEKRIKEYEEAIAKTQEALKKLEAQLGELARQAQEIQQKQAMGFSVKK.

It belongs to the prefoldin subunit alpha family. As to quaternary structure, heterohexamer of two alpha and four beta subunits.

The protein resides in the cytoplasm. Its function is as follows. Molecular chaperone capable of stabilizing a range of proteins. Seems to fulfill an ATP-independent, HSP70-like function in archaeal de novo protein folding. This chain is Prefoldin subunit alpha 1, found in Thermococcus kodakarensis (strain ATCC BAA-918 / JCM 12380 / KOD1) (Pyrococcus kodakaraensis (strain KOD1)).